A 358-amino-acid polypeptide reads, in one-letter code: MPSSVIMFTFLALTVLTAVMVGTSEAVSCMDNKNKPVDWFIVYKLPQDSASSKPVIREGYGQMYMDVNNQALKFSSTSLKDDDHAIAYTVDDIYKNHGKGNLAHVMYNDQPPAGEEIQSGLVGHTKGVLAFDGTSGFWLVHSVPKFPLPASKSYNWPDNAKRNGQTLLCITFKYDQFEKIGQQLKYNYPGVYDSDLPSKLVGKTPSIVDLVKNVHVTSPPWNRQLNLQSKSGQTFVSFNKASKWGEDLYKNWLATHFKSGLYCETWQNGGRNLNSSCEAGLNVYNVKKVSLSGGSDFKGTKDHSKWAVTTKSGLKWTCIGGINRQTSQMYRGGGAVCLENANVHKAFYDSVAEYEPCT.

A signal peptide spans 1–26 (MPSSVIMFTFLALTVLTAVMVGTSEA). The N-linked (GlcNAc...) asparagine glycan is linked to asparagine 274. The active site involves histidine 303.

It belongs to the DNase II family. Plancitoxin is a heterodimer of alpha and beta subunits; disulfide-linked by a single disulfide bond. Venom gland.

It localises to the secreted. The enzyme catalyses Endonucleolytic cleavage to nucleoside 3'-phosphates and 3'-phosphooligonucleotide end-products.. Its function is as follows. Hydrolyzes DNA with an optimum pH of 7.2. Is potently hepatotoxic. It induces caspase-independent apoptosis (on rat liver cells) through the following procedure: binding to a specific receptor in the cytoplasmic membrane, entering the cell, entering the nucleus and degrading DNA. This is Plancitoxin-1 from Acanthaster planci (Crown-of-thorns starfish).